The following is a 143-amino-acid chain: Large ribosomal subunit protein uL11 (143 aa).

It belongs to the universal ribosomal protein uL11 family. As to quaternary structure, part of the ribosomal stalk of the 50S ribosomal subunit. Interacts with L10 and the large rRNA to form the base of the stalk. L10 forms an elongated spine to which L12 dimers bind in a sequential fashion forming a multimeric L10(L12)X complex. Post-translationally, one or more lysine residues are methylated.

In terms of biological role, forms part of the ribosomal stalk which helps the ribosome interact with GTP-bound translation factors. The chain is Large ribosomal subunit protein uL11 from Thiobacillus denitrificans (strain ATCC 25259 / T1).